A 1159-amino-acid polypeptide reads, in one-letter code: WASH complex subunit 5 (1159 aa).

At S917 the chain carries Phosphoserine.

Belongs to the strumpellin family. In terms of assembly, component of the WASH core complex also described as WASH regulatory complex (SHRC) composed of WASH (WASHC1, WASH2P or WASH3P), WASHC2 (WASHC2A or WASHC2C), WASHC3, WASHC4 and WASHC5. The WASH core complex associates via WASHC2 with the F-actin-capping protein dimer (formed by CAPZA1, CAPZA2 or CAPZA3 and CAPZB) in a transient or substoichiometric manner which was initially described as WASH complex. Interacts with VCP, PI4K2A.

Its subcellular location is the cytoplasm. The protein localises to the cytosol. The protein resides in the endoplasmic reticulum. It localises to the early endosome. Its function is as follows. Acts as a component of the WASH core complex that functions as a nucleation-promoting factor (NPF) at the surface of endosomes, where it recruits and activates the Arp2/3 complex to induce actin polymerization, playing a key role in the fission of tubules that serve as transport intermediates during endosome sorting. May be involved in axonal outgrowth. Involved in cellular localization of ADRB2. Involved in cellular trafficking of BLOC-1 complex cargos such as ATP7A and VAMP7. This Pongo abelii (Sumatran orangutan) protein is WASH complex subunit 5.